Reading from the N-terminus, the 337-residue chain is m7GpppX diphosphatase (337 aa).

Residues 1 to 35 form a disordered region; it reads MADAAPQLGKRKRELDVEEAHAASTEEKEAGVGNG. The residue at position 2 (alanine 2) is an N-acetylalanine. The short motif at 10-13 is the nuclear localization signal (NLS) element; sequence KRKR. Over residues 13–30 the composition is skewed to basic and acidic residues; sequence RELDVEEAHAASTEEKEA. A phosphoserine mark is found at serine 24 and serine 101. N6-acetyllysine is present on residues lysine 138 and lysine 142. Residues 142–154 carry the nuclear export sequence (NES) motif; the sequence is KYLRQDLRLIRET. Residues tryptophan 175, glutamate 185, aspartate 205, lysine 207, and 268 to 279 contribute to the substrate site; that span reads HYLPSYYHLHVH. A Histidine triad motif motif is present at residues 275–279; that stretch reads HLHVH. Histidine 277 (nucleophile) is an active-site residue.

The protein belongs to the HIT family. In terms of assembly, homodimer. Associates with components of the exosome multienzyme ribonuclease complex, such as EXOSC3 and EXOSC4. Interacts with NDOR1. In terms of tissue distribution, detected in liver, brain, kidney, testis and prostate.

The protein localises to the cytoplasm. The protein resides in the nucleus. The enzyme catalyses a 5'-end (N(7)-methyl 5'-triphosphoguanosine)-ribonucleoside in mRNA + H2O = N(7)-methyl-GMP + a 5'-end diphospho-ribonucleoside in mRNA + 2 H(+). With respect to regulation, the hydrolytic product 7-methylguanosine diphosphate (m7GDP) efficiently inhibits the decapping scavenger activity and acts as a competitive inhibitor in vitro. Inhibited by 2,4-diaminoquinazoline. Its function is as follows. Decapping scavenger enzyme that catalyzes the cleavage of a residual cap structure following the degradation of mRNAs by the 3'-&gt;5' exosome-mediated mRNA decay pathway. Hydrolyzes cap analog structures like 7-methylguanosine nucleoside triphosphate (m7GpppG) with up to 10 nucleotide substrates (small capped oligoribonucleotides) and specifically releases 5'-phosphorylated RNA fragments and 7-methylguanosine monophosphate (m7GMP). Cleaves cap analog structures like tri-methyl guanosine nucleoside triphosphate (m3(2,2,7)GpppG) with very poor efficiency. Does not hydrolyze unmethylated cap analog (GpppG) and shows no decapping activity on intact m7GpppG-capped mRNA molecules longer than 25 nucleotides. Does not hydrolyze 7-methylguanosine diphosphate (m7GDP) to m7GMP. May also play a role in the 5'-&gt;3 mRNA decay pathway; m7GDP, the downstream product released by the 5'-&gt;3' mRNA mediated decapping activity, may be also converted by DCPS to m7GMP. Binds to m7GpppG and strongly to m7GDP. Plays a role in first intron splicing of pre-mRNAs. Inhibits activation-induced cell death. This chain is m7GpppX diphosphatase (DCPS), found in Homo sapiens (Human).